We begin with the raw amino-acid sequence, 530 residues long: UDP-glucuronosyltransferase 2B14 (530 aa).

The N-terminal stretch at 1-24 (MSVKHVSVLLLLLQLSCCFRTGSC) is a signal peptide. N134 and N316 each carry an N-linked (GlcNAc...) asparagine glycan. Residues 494 to 510 (VVGFLVSCAAFLIFLVI) form a helical membrane-spanning segment.

It belongs to the UDP-glycosyltransferase family.

It is found in the microsome membrane. The protein localises to the endoplasmic reticulum membrane. It carries out the reaction glucuronate acceptor + UDP-alpha-D-glucuronate = acceptor beta-D-glucuronoside + UDP + H(+). Its function is as follows. UDPGT is of major importance in the conjugation and subsequent elimination of potentially toxic xenobiotics and endogenous compounds. The sequence is that of UDP-glucuronosyltransferase 2B14 (UGT2B14) from Oryctolagus cuniculus (Rabbit).